A 557-amino-acid chain; its full sequence is Formate--tetrahydrofolate ligase (557 aa).

ATP is bound at residue threonine 66 to serine 73.

The protein belongs to the formate--tetrahydrofolate ligase family.

The enzyme catalyses (6S)-5,6,7,8-tetrahydrofolate + formate + ATP = (6R)-10-formyltetrahydrofolate + ADP + phosphate. It participates in one-carbon metabolism; tetrahydrofolate interconversion. This chain is Formate--tetrahydrofolate ligase, found in Lactobacillus johnsonii (strain CNCM I-12250 / La1 / NCC 533).